Consider the following 61-residue polypeptide: Large ribosomal subunit protein uL30 (61 aa).

The protein belongs to the universal ribosomal protein uL30 family. As to quaternary structure, part of the 50S ribosomal subunit.

The protein is Large ribosomal subunit protein uL30 of Exiguobacterium sibiricum (strain DSM 17290 / CCUG 55495 / CIP 109462 / JCM 13490 / 255-15).